The chain runs to 347 residues: Oocyte-specific homeobox protein 6 (347 aa).

Disordered stretches follow at residues 1–20 (MLQYNQSPHMPQDPSLHSKF) and 54–86 (PRSPMQSSHSVPERDLCPQESQGPSGKSSIQMQ). Residues 72–85 (QESQGPSGKSSIQM) show a composition bias toward polar residues. Positions 145–204 (HRKIRTVYTEEQKCVLKKHFHKCTYPSREQRMALAVLVGVTANEIQIWFKNHRAKSKRES) form a DNA-binding region, homeobox.

The protein belongs to the paired homeobox family. Obox subfamily. As to expression, specifically expressed in early embryos.

The protein localises to the nucleus. Functionally, transcription factor required for zygotic genome activation (ZGA), a critical event in early embryonic development during which the developmental control passes from maternally provided mRNAs to the expression of the zygotic genome after fertilization. In Mus musculus (Mouse), this protein is Oocyte-specific homeobox protein 6.